The primary structure comprises 458 residues: Trk system potassium uptake protein TrkA (458 aa).

Residues 1–123 (MKIIILGAGQ…SDAVPIDHLI (123 aa)) form the RCK N-terminal 1 domain. Residues 7-11 (GAGQV), aspartate 30, 73-74 (TS), and arginine 98 each bind NAD(+). In terms of domain architecture, RCK C-terminal 1 spans 143–227 (LQVVNFAEGK…IRAVMSELQR (85 aa)). Residues 232-348 (YKRIMLVGGG…VQGSVIDIAI (117 aa)) enclose the RCK N-terminal 2 domain. Residue 234-262 (RIMLVGGGNIGAGLARRLEKDYSVKLIER) participates in NAD(+) binding. Positions 368 to 453 (VGVSSLRRGV…ITDVERLFQP (86 aa)) constitute an RCK C-terminal 2 domain.

It localises to the cell inner membrane. Part of the constitutive potassium transport systems TrkG and TrkH. May regulate the transport activity of TrkG and TrkH systems. Binds to NAD(+) and NADH. This Escherichia coli O157:H7 protein is Trk system potassium uptake protein TrkA (trkA).